We begin with the raw amino-acid sequence, 292 residues long: Protein-L-isoaspartate O-methyltransferase (292 aa).

Positions 1–76 (MTEKKRFPLS…AAAPSSNERA (76 aa)) are disordered. The span at 28-48 (NRSSTSGKVATPQTATQNASQ) shows a compositional bias: polar residues. The active site involves serine 138.

This sequence belongs to the methyltransferase superfamily. L-isoaspartyl/D-aspartyl protein methyltransferase family.

It is found in the cytoplasm. The enzyme catalyses [protein]-L-isoaspartate + S-adenosyl-L-methionine = [protein]-L-isoaspartate alpha-methyl ester + S-adenosyl-L-homocysteine. Catalyzes the methyl esterification of L-isoaspartyl residues in peptides and proteins that result from spontaneous decomposition of normal L-aspartyl and L-asparaginyl residues. It plays a role in the repair and/or degradation of damaged proteins. The protein is Protein-L-isoaspartate O-methyltransferase of Janthinobacterium sp. (strain Marseille) (Minibacterium massiliensis).